A 333-amino-acid polypeptide reads, in one-letter code: Cell division protein ZipA (333 aa).

The Periplasmic portion of the chain corresponds to 1–5 (MQELR). Residues 6–26 (LVLILVGALAIAALLFHGLWT) form a helical membrane-spanning segment. Residues 27-333 (SRKETSSKFG…KQRVKVFCRK (307 aa)) are Cytoplasmic-facing. The segment covering 72–81 (KEPAFAREEV) has biased composition (basic and acidic residues). Residues 72–119 (KEPAFAREEVPTSDDPLFEGTVSSESNKFTQQEKPTVQQAQPQPQPQP) form a disordered region. The span at 92-107 (TVSSESNKFTQQEKPT) shows a compositional bias: polar residues. Over residues 108-119 (VQQAQPQPQPQP) the composition is skewed to low complexity.

It belongs to the ZipA family. As to quaternary structure, interacts with FtsZ via their C-terminal domains.

It is found in the cell inner membrane. Functionally, essential cell division protein that stabilizes the FtsZ protofilaments by cross-linking them and that serves as a cytoplasmic membrane anchor for the Z ring. Also required for the recruitment to the septal ring of downstream cell division proteins. In Aliivibrio fischeri (strain ATCC 700601 / ES114) (Vibrio fischeri), this protein is Cell division protein ZipA.